The following is a 388-amino-acid chain: Methylthioribose-1-phosphate isomerase (388 aa).

The active-site Proton donor is aspartate 252.

Belongs to the eIF-2B alpha/beta/delta subunits family. MtnA subfamily.

The protein localises to the cytoplasm. The protein resides in the nucleus. The catalysed reaction is 5-(methylsulfanyl)-alpha-D-ribose 1-phosphate = 5-(methylsulfanyl)-D-ribulose 1-phosphate. Its pathway is amino-acid biosynthesis; L-methionine biosynthesis via salvage pathway; L-methionine from S-methyl-5-thio-alpha-D-ribose 1-phosphate: step 1/6. Functionally, catalyzes the interconversion of methylthioribose-1-phosphate (MTR-1-P) into methylthioribulose-1-phosphate (MTRu-1-P). The polypeptide is Methylthioribose-1-phosphate isomerase (Verticillium alfalfae (strain VaMs.102 / ATCC MYA-4576 / FGSC 10136) (Verticillium wilt of alfalfa)).